The following is a 267-amino-acid chain: Transcription factor Spi-B (267 aa).

The TAD1 (Acidic) stretch occupies residues 1 to 31; sequence MLALEAAQLDGPHLSCLYPEGVFYDLDSCKP. The TAD2 stretch occupies residues 41–62; sequence LDSTWGWTEAPPAPAIAPYEAF. A DNA-binding region (ETS) is located at residues 174-257; that stretch reads LRLYQFLLGL…VKRKLTYQFD (84 aa).

It belongs to the ETS family. As to quaternary structure, can form homotypic interactions. Interacts with IRF4/Pip. Interacts with JUN. Interacts with TBP. May also interact with CREBBP and EP300. Interacts with NONO/p54(nrb). Expressed in the medulla of the thymus, the spleen and germinal centers of the lymph nodes. Expressed in B-cells and T-cells, expression increases during B-cell maturation and decreases during T-cell maturation.

It localises to the nucleus. Functionally, sequence specific transcriptional activator which binds to the PU-box, a purine-rich DNA sequence (5'-GAGGAA-3') that can act as a lymphoid-specific enhancer. Promotes development of plasmacytoid dendritic cells (pDCs), also known as type 2 DC precursors (pre-DC2) or natural interferon (IFN)-producing cells. These cells have the capacity to produce large amounts of interferon and block viral replication. Required for B-cell receptor (BCR) signaling, which is necessary for normal B-cell development and antigenic stimulation. The sequence is that of Transcription factor Spi-B (Spib) from Mus musculus (Mouse).